We begin with the raw amino-acid sequence, 101 residues long: Putative RNA-binding protein RbpA (101 aa).

In terms of domain architecture, RRM spans 2–79 (SIYVGNLSYD…RDLKVNKAKP (78 aa)). The span at 73–83 (KVNKAKPRENR) shows a compositional bias: basic and acidic residues. Residues 73-101 (KVNKAKPRENRSGGGSFGGGRKSYGGSRY) are disordered. The span at 84-101 (SGGGSFGGGRKSYGGSRY) shows a compositional bias: gly residues.

The sequence is that of Putative RNA-binding protein RbpA (rbpA) from Synechocystis sp. (strain ATCC 27184 / PCC 6803 / Kazusa).